The primary structure comprises 310 residues: Methionyl-tRNA formyltransferase (310 aa).

109–112 (SLLP) contacts (6S)-5,6,7,8-tetrahydrofolate.

Belongs to the Fmt family.

It catalyses the reaction L-methionyl-tRNA(fMet) + (6R)-10-formyltetrahydrofolate = N-formyl-L-methionyl-tRNA(fMet) + (6S)-5,6,7,8-tetrahydrofolate + H(+). Attaches a formyl group to the free amino group of methionyl-tRNA(fMet). The formyl group appears to play a dual role in the initiator identity of N-formylmethionyl-tRNA by promoting its recognition by IF2 and preventing the misappropriation of this tRNA by the elongation apparatus. In Pseudomonas putida (strain ATCC 700007 / DSM 6899 / JCM 31910 / BCRC 17059 / LMG 24140 / F1), this protein is Methionyl-tRNA formyltransferase.